We begin with the raw amino-acid sequence, 226 residues long: Xanthocillin biosynthesis cluster protein F (226 aa).

Its pathway is secondary metabolite biosynthesis. Functionally, part of the gene cluster that mediates the biosynthesis of the isocyanide xanthocillin and its derivatives. The first step of the pathway consists in the conversion of tyrosine into a vinyl-isonitrile intermediate by the isocyanide synthase xanB. Subsequent oxidative dimerization of this intermediate to form xanthocillin may involve the cytochrome P450 monooxygenase xanG, whose expression is coregulated with that of XanB. Xanthocillin can be further modified by the isonitrile hydratase-like protein xanA which introduces N-formyl groups and the methyltransferase xanE which introduces methyl groups, leading to the production of several derivatives including fumiformamide. Finally, fumiformamide can be subject to both oxidative and reductive cyclization to yield melanocins E and F, respectively. In Aspergillus fumigatus (strain ATCC MYA-4609 / CBS 101355 / FGSC A1100 / Af293) (Neosartorya fumigata), this protein is Xanthocillin biosynthesis cluster protein F.